Consider the following 138-residue polypeptide: Ribosome-binding factor A (138 aa).

Belongs to the RbfA family. In terms of assembly, monomer. Binds 30S ribosomal subunits, but not 50S ribosomal subunits or 70S ribosomes.

The protein localises to the cytoplasm. In terms of biological role, one of several proteins that assist in the late maturation steps of the functional core of the 30S ribosomal subunit. Associates with free 30S ribosomal subunits (but not with 30S subunits that are part of 70S ribosomes or polysomes). Required for efficient processing of 16S rRNA. May interact with the 5'-terminal helix region of 16S rRNA. This is Ribosome-binding factor A from Paracoccus denitrificans (strain Pd 1222).